The primary structure comprises 355 residues: Chemerin-like receptor 2 (355 aa).

Residues 1–41 (MEDLEETLFEEFENYSYALDYYSLESDLEEKVQLGVVHWVS) lie on the Extracellular side of the membrane. N-linked (GlcNAc...) asparagine glycosylation occurs at N14. Residues 42-62 (LVLYCLSFVLGIPGNAIVIWF) traverse the membrane as a helical segment. Residues 63–73 (TGFKWKRTVST) lie on the Cytoplasmic side of the membrane. The chain crosses the membrane as a helical span at residues 74 to 94 (LWFLNLAIADFIFLLFLPLYI). Topologically, residues 95–112 (SYVVMNFHWPFGIWLCKA) are extracellular. A disulfide bond links C110 and C187. Residues 113-133 (NSFTAQLNMFASVFFLTVISL) traverse the membrane as a helical segment. The Cytoplasmic segment spans residues 134-154 (DHYIHLIHPVLSHRHRTLKNS). The helical transmembrane segment at 155–175 (LIVIIFIWLLASLIGGPALYF) threads the bilayer. The Extracellular segment spans residues 176-210 (RDTVEFNNHTLCYNNFQKHDPDLTVIRHHVLTWVK). The helical transmembrane segment at 211-231 (YIVGYLFPLLTMSICYLCLIL) threads the bilayer. Residues 232 to 247 (KVKKRSILISSRHFWT) lie on the Cytoplasmic side of the membrane. The chain crosses the membrane as a helical span at residues 248-268 (ILAVVVAFVVCWTPYHLFSIW). The Extracellular segment spans residues 269 to 286 (ELTIHHNSYSHHVMQAGI). A helical membrane pass occupies residues 287–307 (PLSTGLAFLNSCLNPILYVLI). The Cytoplasmic segment spans residues 308-355 (SKKFQARFRSSVAEILKYTLWEVSCSGTVSEQLRNSETKNLCLLETAQ).

It belongs to the chemokine-like receptor (CMKLR) family.

It localises to the cell membrane. In terms of biological role, receptor for chemoattractant adipokine chemerin/RARRES2 suggesting a role for this receptor in the regulation of inflammation and energy homesotasis. Signals mainly via beta-arrestin pathway. Binding of RARRES2 activates weakly G proteins, calcium mobilization and MAPK1/MAPK3 (ERK1/2) phosphorylation too. Acts also as a receptor for TAFA1, mediates its effects on neuronal stem-cell proliferation and differentiation via the activation of ROCK/ERK and ROCK/STAT3 signaling pathway. The chain is Chemerin-like receptor 2 (CMKLR2) from Macaca fascicularis (Crab-eating macaque).